Consider the following 321-residue polypeptide: Lipoyl synthase (321 aa).

The [4Fe-4S] cluster site is built by C68, C73, C79, C94, C98, C101, and S308. Residues 80–297 (FNHGTATFMI…KAEALAMGFT (218 aa)) form the Radical SAM core domain.

Belongs to the radical SAM superfamily. Lipoyl synthase family. Requires [4Fe-4S] cluster as cofactor.

Its subcellular location is the cytoplasm. The enzyme catalyses [[Fe-S] cluster scaffold protein carrying a second [4Fe-4S](2+) cluster] + N(6)-octanoyl-L-lysyl-[protein] + 2 oxidized [2Fe-2S]-[ferredoxin] + 2 S-adenosyl-L-methionine + 4 H(+) = [[Fe-S] cluster scaffold protein] + N(6)-[(R)-dihydrolipoyl]-L-lysyl-[protein] + 4 Fe(3+) + 2 hydrogen sulfide + 2 5'-deoxyadenosine + 2 L-methionine + 2 reduced [2Fe-2S]-[ferredoxin]. It functions in the pathway protein modification; protein lipoylation via endogenous pathway; protein N(6)-(lipoyl)lysine from octanoyl-[acyl-carrier-protein]: step 2/2. Its function is as follows. Catalyzes the radical-mediated insertion of two sulfur atoms into the C-6 and C-8 positions of the octanoyl moiety bound to the lipoyl domains of lipoate-dependent enzymes, thereby converting the octanoylated domains into lipoylated derivatives. This Salmonella paratyphi A (strain AKU_12601) protein is Lipoyl synthase.